We begin with the raw amino-acid sequence, 289 residues long: Splicing factor C9orf78 (289 aa).

Residues 1 to 12 show a composition bias toward basic residues; that stretch reads MPVVRKIFRRRR. The tract at residues 1-27 is disordered; it reads MPVVRKIFRRRRGDSESEEDEQDSEEV. The segment at 5-58 is interaction with SNRNP200; the sequence is RKIFRRRRGDSESEEDEQDSEEVRLKLEETREVQNLRKRPNGVSAVALLVGEKV. A phosphoserine mark is found at Ser-15 and Ser-17. Phosphotyrosine is present on Tyr-147. The segment covering 232 to 283 has biased composition (basic and acidic residues); the sequence is LNAPIRRNKEEPKARPLRVGDTEKPEPERSPPNRKRPANEKATDDYHYEKFK. Positions 232 to 289 are disordered; it reads LNAPIRRNKEEPKARPLRVGDTEKPEPERSPPNRKRPANEKATDDYHYEKFKKMNRRY. A Phosphothreonine modification is found at Thr-253. Ser-261 is modified (phosphoserine).

This sequence belongs to the TLS1 family. Component of the spliceosome. Interacts with SNRNP200; the interaction is direct. Interacts with PRPF8.

The protein resides in the nucleus. The protein localises to the chromosome. It localises to the centromere. Plays a role in pre-mRNA splicing by promoting usage of the upstream 3'-splice site at alternative NAGNAG splice sites; these are sites featuring alternative acceptor motifs separated by only a few nucleotides. May also modulate exon inclusion events. Plays a role in spliceosomal remodeling by displacing WBP4 from SNRNP200 and may act to inhibit SNRNP200 helicase activity. Binds U5 snRNA. Required for proper chromosome segregation. Not required for splicing of shelterin components. This is Splicing factor C9orf78 (C9orf78) from Homo sapiens (Human).